The chain runs to 312 residues: Methionyl-tRNA formyltransferase (312 aa).

Position 107–110 (107–110 (SLLP)) interacts with (6S)-5,6,7,8-tetrahydrofolate.

It belongs to the Fmt family.

The enzyme catalyses L-methionyl-tRNA(fMet) + (6R)-10-formyltetrahydrofolate = N-formyl-L-methionyl-tRNA(fMet) + (6S)-5,6,7,8-tetrahydrofolate + H(+). Attaches a formyl group to the free amino group of methionyl-tRNA(fMet). The formyl group appears to play a dual role in the initiator identity of N-formylmethionyl-tRNA by promoting its recognition by IF2 and preventing the misappropriation of this tRNA by the elongation apparatus. This chain is Methionyl-tRNA formyltransferase, found in Endomicrobium trichonymphae.